A 200-amino-acid polypeptide reads, in one-letter code: Protein C2-DOMAIN ABA-RELATED 5 (200 aa).

The C2 domain maps to 22-142 (VAGEKHKDRR…LKMHLHDLPS (121 aa)). The Ca(2+) site is built by R57, D58, D63, D109, Y110, D111, and D117.

This sequence belongs to the plant CAR protein family. Binds to PYR/PYL/RCAR abscisic acid intracellular receptors in an ABA-independent manner, both at the plasma membrane and in the nucleus.

The protein resides in the cell membrane. It is found in the nucleus. Functionally, stimulates the GTPase/ATPase activities of Obg-like ATPases. Mediates the transient calcium-dependent interaction of PYR/PYL/RCAR abscisic acid (ABA) receptors with the plasma membrane and thus regulates ABA sensitivity. In Arabidopsis thaliana (Mouse-ear cress), this protein is Protein C2-DOMAIN ABA-RELATED 5.